Here is a 183-residue protein sequence, read N- to C-terminus: Acireductone dioxygenase (183 aa).

Fe(2+) contacts are provided by H95, H97, E101, and H139. The Ni(2+) site is built by H95, H97, E101, and H139.

This sequence belongs to the acireductone dioxygenase (ARD) family. As to quaternary structure, monomer. It depends on Fe(2+) as a cofactor. Ni(2+) serves as cofactor.

The enzyme catalyses 1,2-dihydroxy-5-(methylsulfanyl)pent-1-en-3-one + O2 = 3-(methylsulfanyl)propanoate + CO + formate + 2 H(+). The catalysed reaction is 1,2-dihydroxy-5-(methylsulfanyl)pent-1-en-3-one + O2 = 4-methylsulfanyl-2-oxobutanoate + formate + 2 H(+). The protein operates within amino-acid biosynthesis; L-methionine biosynthesis via salvage pathway; L-methionine from S-methyl-5-thio-alpha-D-ribose 1-phosphate: step 5/6. Catalyzes 2 different reactions between oxygen and the acireductone 1,2-dihydroxy-3-keto-5-methylthiopentene (DHK-MTPene) depending upon the metal bound in the active site. Fe-containing acireductone dioxygenase (Fe-ARD) produces formate and 2-keto-4-methylthiobutyrate (KMTB), the alpha-ketoacid precursor of methionine in the methionine recycle pathway. Ni-containing acireductone dioxygenase (Ni-ARD) produces methylthiopropionate, carbon monoxide and formate, and does not lie on the methionine recycle pathway. This is Acireductone dioxygenase from Hydrogenobaculum sp. (strain Y04AAS1).